A 366-amino-acid polypeptide reads, in one-letter code: Protein lifeguard 1 (366 aa).

The tract at residues 1–141 is disordered; that stretch reads MSHEKSFLVS…GPPSYYDNQD (141 aa). 2 stretches are compositionally biased toward pro residues: residues 14-44 and 67-109; these read YPPP…PFQP and GPYP…PNPY. Helical transmembrane passes span 160–180, 192–212, 223–243, 248–268, 278–298, 302–322, and 341–361; these read VFLV…VFTF, VWTY…LSCC, LVAL…IASF, AVIM…IFSM, VGVL…CIFI, VLEI…LAVD, and FAAL…LTII.

The protein belongs to the BI1 family. LFG subfamily.

It localises to the membrane. Functionally, potential apoptotic regulator. In Bos taurus (Bovine), this protein is Protein lifeguard 1 (GRINA).